Consider the following 307-residue polypeptide: Cytochrome c1, heme protein, mitochondrial (307 aa).

The transit peptide at 1–56 directs the protein to the mitochondrion; sequence MFQFVKKKNEFLKFARLGSRAFTQNAQKTHSKGSNIALVSSSLLSVGMIALYYNVY. Over 57-269 the chain is Mitochondrial intermembrane; the sequence is GPSLSAGTPK…EPELDIRKKM (213 aa). Residues 89–259 enclose the Cytochrome c domain; the sequence is ASLRRGFQVY…DVVNFLHWAS (171 aa). Heme c is bound by residues C102, C105, H106, and M225. Residues 270-287 form a helical membrane-spanning segment; the sequence is GFQVITVLTILTALSMWY. At 288-307 the chain is on the mitochondrial matrix side; it reads KRFKWTPIKNRKIFYQRPIK.

This sequence belongs to the cytochrome c family. As to quaternary structure, component of the ubiquinol-cytochrome c oxidoreductase (cytochrome b-c1 complex, complex III, CIII), a multisubunit enzyme composed of 3 respiratory subunits cytochrome b, cytochrome c1 and Rieske protein, 2 core protein subunits, and additional low-molecular weight protein subunits. The complex exists as an obligatory dimer and forms supercomplexes (SCs) in the inner mitochondrial membrane with cytochrome c oxidase (complex IV, CIV). The cofactor is heme c.

The protein localises to the mitochondrion inner membrane. The catalysed reaction is a quinol + 2 Fe(III)-[cytochrome c](out) = a quinone + 2 Fe(II)-[cytochrome c](out) + 2 H(+)(out). Functionally, component of the ubiquinol-cytochrome c oxidoreductase, a multisubunit transmembrane complex that is part of the mitochondrial electron transport chain which drives oxidative phosphorylation. The respiratory chain contains 3 multisubunit complexes succinate dehydrogenase (complex II, CII), ubiquinol-cytochrome c oxidoreductase (cytochrome b-c1 complex, complex III, CIII) and cytochrome c oxidase (complex IV, CIV), that cooperate to transfer electrons derived from NADH and succinate to molecular oxygen, creating an electrochemical gradient over the inner membrane that drives transmembrane transport and the ATP synthase. The cytochrome b-c1 complex catalyzes electron transfer from ubiquinol to cytochrome c, linking this redox reaction to translocation of protons across the mitochondrial inner membrane, with protons being carried across the membrane as hydrogens on the quinol. In the process called Q cycle, 2 protons are consumed from the matrix, 4 protons are released into the intermembrane space and 2 electrons are passed to cytochrome c. Cytochrome c1 is a catalytic core subunit containing a c-type heme. It transfers electrons from the [2Fe-2S] iron-sulfur cluster of the Rieske protein to cytochrome c. The polypeptide is Cytochrome c1, heme protein, mitochondrial (cyt1) (Schizosaccharomyces pombe (strain 972 / ATCC 24843) (Fission yeast)).